A 191-amino-acid polypeptide reads, in one-letter code: Protein GrpE (191 aa).

Belongs to the GrpE family. Homodimer.

Its subcellular location is the cytoplasm. Functionally, participates actively in the response to hyperosmotic and heat shock by preventing the aggregation of stress-denatured proteins, in association with DnaK and GrpE. It is the nucleotide exchange factor for DnaK and may function as a thermosensor. Unfolded proteins bind initially to DnaJ; upon interaction with the DnaJ-bound protein, DnaK hydrolyzes its bound ATP, resulting in the formation of a stable complex. GrpE releases ADP from DnaK; ATP binding to DnaK triggers the release of the substrate protein, thus completing the reaction cycle. Several rounds of ATP-dependent interactions between DnaJ, DnaK and GrpE are required for fully efficient folding. This chain is Protein GrpE, found in Nitratidesulfovibrio vulgaris (strain ATCC 29579 / DSM 644 / CCUG 34227 / NCIMB 8303 / VKM B-1760 / Hildenborough) (Desulfovibrio vulgaris).